The primary structure comprises 296 residues: Putative mannose 6-phosphate receptor-like protein C530.09c (296 aa).

A signal peptide spans 1 to 25 (MRLLTCLINVLAGLTLFSQFQRAFG). Over 26-206 (LTITRRGFKV…TVKKDSTLNP (181 aa)) the chain is Lumenal. The MRH domain occupies 42 to 197 (PFCALHHPNT…EWKTIHACPT (156 aa)). Residues Cys-44 and Cys-87 are joined by a disulfide bond. 5 N-linked (GlcNAc...) asparagine glycosylation sites follow: Asn-64, Asn-81, Asn-93, Asn-96, and Asn-143. 2 disulfides stabilise this stretch: Cys-147-Cys-183 and Cys-163-Cys-195. A helical membrane pass occupies residues 207–227 (VSVFLLFCAIAFLAYFVGGFV). Topologically, residues 228 to 249 (YQRVVLNARGLRQIPNYEMWRS) are cytoplasmic. A helical membrane pass occupies residues 250-270 (LFGFISDIVIILYSSILSILP). Topologically, residues 271 to 296 (SSITRMRGNRRNIDYVEDALIDDIDT) are lumenal.

The protein belongs to the MRL1/IGF2R family.

Its subcellular location is the golgi apparatus. The protein localises to the trans-Golgi network membrane. It localises to the endosome membrane. This Schizosaccharomyces pombe (strain 972 / ATCC 24843) (Fission yeast) protein is Putative mannose 6-phosphate receptor-like protein C530.09c.